A 445-amino-acid chain; its full sequence is N-succinylarginine dihydrolase (445 aa).

Substrate contacts are provided by residues 19–28 (AGLSFGNVAS), asparagine 110, and 137–138 (HR). Residue glutamate 174 is part of the active site. Arginine 214 contributes to the substrate binding site. Histidine 250 is an active-site residue. Aspartate 252 and asparagine 363 together coordinate substrate. Cysteine 369 serves as the catalytic Nucleophile.

This sequence belongs to the succinylarginine dihydrolase family. In terms of assembly, homodimer.

It catalyses the reaction N(2)-succinyl-L-arginine + 2 H2O + 2 H(+) = N(2)-succinyl-L-ornithine + 2 NH4(+) + CO2. It participates in amino-acid degradation; L-arginine degradation via AST pathway; L-glutamate and succinate from L-arginine: step 2/5. In terms of biological role, catalyzes the hydrolysis of N(2)-succinylarginine into N(2)-succinylornithine, ammonia and CO(2). The chain is N-succinylarginine dihydrolase from Shewanella woodyi (strain ATCC 51908 / MS32).